Here is a 414-residue protein sequence, read N- to C-terminus: Putative F-box/kelch-repeat protein At2g29800 (414 aa).

Residues Met-1–Arg-61 are disordered. The span at Lys-20 to Gln-35 shows a compositional bias: basic and acidic residues. Over residues Asn-40–Glu-54 the composition is skewed to acidic residues. In terms of domain architecture, F-box spans Pro-58–Leu-105. 4 Kelch repeats span residues Lys-163–Gly-211, Arg-212–Val-258, Lys-263–Val-302, and Leu-305–Ala-349.

This Arabidopsis thaliana (Mouse-ear cress) protein is Putative F-box/kelch-repeat protein At2g29800.